Consider the following 179-residue polypeptide: Replication restart protein DnaT (179 aa).

Residues 1-83 (MSSRILTSHF…FEEPAAAPVA (83 aa)) form a required for trimerization and to bind PriB region. The binds ssDNA stretch occupies residues 84–179 (VPMGKFAMYA…DSHIPRGFRG (96 aa)). The segment at 151–179 (SRASNGGQPKRDVNSVSEPDSHIPRGFRG) is disordered. Basic and acidic residues predominate over residues 159 to 173 (PKRDVNSVSEPDSHI).

The protein belongs to the DnaT family. In terms of assembly, homotrimer. Interacts with PriB. Interacts with PriC. Component of the replication restart primosome. Primosome assembly occurs via a 'hand-off' mechanism. PriA binds to replication forks, subsequently PriB then DnaT bind; DnaT then displaces ssDNA to generate the helicase loading substrate.

Functionally, involved in the restart of stalled replication forks, which reloads the replicative helicase on sites other than the origin of replication. Can function in multiple replication restart pathways. Displaces ssDNA from a PriB-ssDNA complex. Probably forms a spiral filament on ssDNA. In terms of biological role, binds single-stranded (ss)DNA. The minimal binding site is about 26 +/- 2 nucleotides (nt) per trimer. Two DNA-protein complexes are seen with 55 nt-long ssDNA. The protein is Replication restart protein DnaT of Klebsiella pneumoniae subsp. pneumoniae (strain ATCC 700721 / MGH 78578).